The primary structure comprises 136 residues: Keratin-associated protein 4-2 (136 aa).

Repeat copies occupy residues 5–9 (CCGSV), 20–24 (CCRPS), 25–29 (CCQTT), 30–34 (CCRTT), 35–39 (CCRPS), 40–44 (CCVSS), 45–49 (CCRPQ), 50–54 (CCQSV), 55–59 (CCQPT), 60–64 (CCSPS), 65–69 (CCQTT), 70–74 (CCRTT), 75–79 (CCRPS), 80–84 (CCVSS), 90–94 (CCQSV), 95–99 (YCQPT), 100–104 (CCRPS), 110–114 (CCRTT), 120–124 (CCVST), and 125–129 (CCRPT). The interval 5–129 (CCGSVCSDQG…CCVSTCCRPT (125 aa)) is 20 X 5 AA repeats OF C-C-[GRQVS]-[SPT]-[VSTQ].

It belongs to the KRTAP type 4 family. In terms of assembly, interacts with hair keratins.

In terms of biological role, in the hair cortex, hair keratin intermediate filaments are embedded in an interfilamentous matrix, consisting of hair keratin-associated proteins (KRTAP), which are essential for the formation of a rigid and resistant hair shaft through their extensive disulfide bond cross-linking with abundant cysteine residues of hair keratins. The matrix proteins include the high-sulfur and high-glycine-tyrosine keratins. The chain is Keratin-associated protein 4-2 (KRTAP4-2) from Homo sapiens (Human).